Here is a 321-residue protein sequence, read N- to C-terminus: Olfactory receptor 5K4 (321 aa).

The Extracellular portion of the chain corresponds to 1–25 (MARENHSLAAEFILIGFTNYPELKT). N-linked (GlcNAc...) asparagine glycosylation occurs at Asn-5. A helical transmembrane segment spans residues 26–46 (LLFVVFSAIYLVTMVGNLGLV). Over 47–54 (ALIYVERR) the chain is Cytoplasmic. Residues 55–75 (LLTPMYIFLGNLALMDSCCSC) form a helical membrane-spanning segment. Over 76–97 (AVTPKMLENFFSEDRIISLYEC) the chain is Extracellular. Cys-97 and Cys-179 are joined by a disulfide. A helical transmembrane segment spans residues 98–118 (MAQFYFLCLAETTDCFLLATM). The Cytoplasmic portion of the chain corresponds to 119 to 139 (AYDRYVAICHPLQYHTMMSKT). A helical transmembrane segment spans residues 140–160 (LCIRMTTGAFKAGNLHSMIHV). Topologically, residues 161 to 205 (GLLLRLTFCRSNKIHHFFCDILPLYRLSCTDPSINELMIYIFSIP) are extracellular. A helical transmembrane segment spans residues 206-226 (IQIFTIATVLISYLCILLTVF). At 227–240 (KMKSKEGRGKAFST) the chain is on the cytoplasmic side. The helical transmembrane segment at 241–261 (CASHFLSVSIFYICLLMYIGP) threads the bilayer. Topologically, residues 262–268 (SEEGDKD) are extracellular. A helical transmembrane segment spans residues 269 to 289 (TPVAIFYAIVIPLLNPFIYSL). The Cytoplasmic segment spans residues 290–321 (RNKEVINVLKKIMRNYNILKQTCSIANLFLIY).

This sequence belongs to the G-protein coupled receptor 1 family.

It is found in the cell membrane. In terms of biological role, odorant receptor. This chain is Olfactory receptor 5K4 (OR5K4), found in Homo sapiens (Human).